We begin with the raw amino-acid sequence, 121 residues long: Large ribosomal subunit protein bL19 (121 aa).

It belongs to the bacterial ribosomal protein bL19 family.

Functionally, this protein is located at the 30S-50S ribosomal subunit interface and may play a role in the structure and function of the aminoacyl-tRNA binding site. The chain is Large ribosomal subunit protein bL19 from Mesomycoplasma hyopneumoniae (strain 232) (Mycoplasma hyopneumoniae).